A 593-amino-acid polypeptide reads, in one-letter code: FAD-binding monooxygenase acrE (593 aa).

Residues 61 to 64 (TWRF), 73 to 74 (DS), and Tyr-79 contribute to the FAD site. NADP(+) is bound at residue 71 to 73 (RVD). NADP(+) is bound by residues 200 to 206 (TGASGVQ) and 223 to 224 (RS).

This sequence belongs to the FAD-binding monooxygenase family. FAD is required as a cofactor.

It participates in secondary metabolite biosynthesis. In terms of biological role, FAD-binding monooxygenase; part of the cluster that mediates the biosynthesis of acurin A, a highly reduced polyketide coupled to a serine via a peptide bond. The activities of the highly reducing polyketide synthase acrA and the nonribosomal peptide synthetase acrB are collectively responsible for the synthesis of the acurin A core structure with a heptaketide backbone produced by acrA covalently fused to a L-serine by acrB. After the formation of the PK-NRP hybrid product, it is detached from acrB by reductive release to set up the formation of the lactam ring by aldol condensation. The hydrolyase acrC then catalyzes water loss to generate a double bond in the ring. This double bond is probably reduced, which is followed by three oxidations at C-22 to generate the carboxylic acid moiety, involving probably the FAD-binding monooxygenase acrE and the cytochrome P450 monooxygenases acrD and acrF. Finally, a last methylation step performed by the O-methyltransferase acrG leads to the production of acurin A. This Aspergillus aculeatus (strain ATCC 16872 / CBS 172.66 / WB 5094) protein is FAD-binding monooxygenase acrE.